The sequence spans 242 residues: Type III pantothenate kinase (242 aa).

7–14 is a binding site for ATP; sequence DLGNSRFK. Substrate is bound by residues Tyr-91 and 98–101; that span reads GVDR. The active-site Proton acceptor is the Asp-100. Residue Thr-121 participates in ATP binding. Thr-171 is a substrate binding site.

Belongs to the type III pantothenate kinase family. In terms of assembly, homodimer. It depends on NH4(+) as a cofactor. Requires K(+) as cofactor.

The protein localises to the cytoplasm. It catalyses the reaction (R)-pantothenate + ATP = (R)-4'-phosphopantothenate + ADP + H(+). It participates in cofactor biosynthesis; coenzyme A biosynthesis; CoA from (R)-pantothenate: step 1/5. In terms of biological role, catalyzes the phosphorylation of pantothenate (Pan), the first step in CoA biosynthesis. The protein is Type III pantothenate kinase of Xylella fastidiosa (strain 9a5c).